Here is a 352-residue protein sequence, read N- to C-terminus: UDP-N-acetylglucosamine--N-acetylmuramyl-(pentapeptide) pyrophosphoryl-undecaprenol N-acetylglucosamine transferase (352 aa).

UDP-N-acetyl-alpha-D-glucosamine-binding residues include S195 and Q287.

It belongs to the glycosyltransferase 28 family. MurG subfamily.

It localises to the cell membrane. The enzyme catalyses Mur2Ac(oyl-L-Ala-gamma-D-Glu-L-Lys-D-Ala-D-Ala)-di-trans,octa-cis-undecaprenyl diphosphate + UDP-N-acetyl-alpha-D-glucosamine = beta-D-GlcNAc-(1-&gt;4)-Mur2Ac(oyl-L-Ala-gamma-D-Glu-L-Lys-D-Ala-D-Ala)-di-trans,octa-cis-undecaprenyl diphosphate + UDP + H(+). It participates in cell wall biogenesis; peptidoglycan biosynthesis. In terms of biological role, cell wall formation. Catalyzes the transfer of a GlcNAc subunit on undecaprenyl-pyrophosphoryl-MurNAc-pentapeptide (lipid intermediate I) to form undecaprenyl-pyrophosphoryl-MurNAc-(pentapeptide)GlcNAc (lipid intermediate II). The polypeptide is UDP-N-acetylglucosamine--N-acetylmuramyl-(pentapeptide) pyrophosphoryl-undecaprenol N-acetylglucosamine transferase (Streptococcus pneumoniae serotype 4 (strain ATCC BAA-334 / TIGR4)).